A 291-amino-acid chain; its full sequence is Ribosomal protein L11 methyltransferase (291 aa).

S-adenosyl-L-methionine is bound by residues threonine 136, glycine 159, aspartate 181, and asparagine 228.

Belongs to the methyltransferase superfamily. PrmA family.

It is found in the cytoplasm. The catalysed reaction is L-lysyl-[protein] + 3 S-adenosyl-L-methionine = N(6),N(6),N(6)-trimethyl-L-lysyl-[protein] + 3 S-adenosyl-L-homocysteine + 3 H(+). Functionally, methylates ribosomal protein L11. The polypeptide is Ribosomal protein L11 methyltransferase (Rhizobium meliloti (strain 1021) (Ensifer meliloti)).